Here is a 165-residue protein sequence, read N- to C-terminus: Large ribosomal subunit protein uL10 (165 aa).

This sequence belongs to the universal ribosomal protein uL10 family. In terms of assembly, part of the ribosomal stalk of the 50S ribosomal subunit. The N-terminus interacts with L11 and the large rRNA to form the base of the stalk. The C-terminus forms an elongated spine to which L12 dimers bind in a sequential fashion forming a multimeric L10(L12)X complex.

Its function is as follows. Forms part of the ribosomal stalk, playing a central role in the interaction of the ribosome with GTP-bound translation factors. This chain is Large ribosomal subunit protein uL10, found in Mycoplasma mycoides subsp. mycoides SC (strain CCUG 32753 / NCTC 10114 / PG1).